Consider the following 296-residue polypeptide: Ribose import binding protein RbsB (296 aa).

Residues 1–25 (MNMKKLATLVSAVALSATVSANAMA) form the signal peptide.

The protein belongs to the bacterial solute-binding protein 2 family. In terms of assembly, the complex is composed of an ATP-binding protein (RbsA), two transmembrane proteins (RbsC) and a solute-binding protein (RbsB).

It localises to the periplasm. Its function is as follows. Part of the ABC transporter complex RbsABC involved in ribose import. Binds ribose. The protein is Ribose import binding protein RbsB (rbsB) of Salmonella typhi.